The sequence spans 98 residues: Citrate lyase acyl carrier protein (98 aa).

The residue at position 14 (Ser14) is an O-(phosphoribosyl dephospho-coenzyme A)serine.

This sequence belongs to the CitD family. As to quaternary structure, oligomer with a subunit composition of (alpha,beta,gamma)6.

The protein localises to the cytoplasm. Functionally, covalent carrier of the coenzyme of citrate lyase. The sequence is that of Citrate lyase acyl carrier protein from Citrobacter koseri (strain ATCC BAA-895 / CDC 4225-83 / SGSC4696).